The chain runs to 64 residues: Small ribosomal subunit protein eS17 (64 aa).

The protein belongs to the eukaryotic ribosomal protein eS17 family.

This chain is Small ribosomal subunit protein eS17, found in Methanococcoides burtonii (strain DSM 6242 / NBRC 107633 / OCM 468 / ACE-M).